Consider the following 280-residue polypeptide: 2,3,4,5-tetrahydropyridine-2,6-dicarboxylate N-succinyltransferase (280 aa).

Belongs to the transferase hexapeptide repeat family.

The protein localises to the cytoplasm. It carries out the reaction (S)-2,3,4,5-tetrahydrodipicolinate + succinyl-CoA + H2O = (S)-2-succinylamino-6-oxoheptanedioate + CoA. Its pathway is amino-acid biosynthesis; L-lysine biosynthesis via DAP pathway; LL-2,6-diaminopimelate from (S)-tetrahydrodipicolinate (succinylase route): step 1/3. The protein is 2,3,4,5-tetrahydropyridine-2,6-dicarboxylate N-succinyltransferase of Methylorubrum extorquens (strain PA1) (Methylobacterium extorquens).